A 662-amino-acid polypeptide reads, in one-letter code: Probable dolichyl-phosphate-mannose--protein mannosyltransferase 7 (662 aa).

The Lumenal portion of the chain corresponds to 1 to 26 (MKDLRLQGPYRKYIPYNIFQQCGIGH). The chain crosses the membrane as a helical span at residues 27–47 (LKTLDYIFAFLIVITNFTLIW). Over 48 to 159 (KSHSSSFWNR…GTIISFDSLE (112 aa)) the chain is Cytoplasmic. Residues 160-180 (WCLFSVVIYSFISISIAKLGT) form a helical membrane-spanning segment. Residues 181-195 (TNWFANVITLSISLG) lie on the Lumenal side of the membrane. The helical transmembrane segment at 196–216 (LAISSKFIGIVTWAFVILSFV) threads the bilayer. At 217-235 (RQFDRLISDVKVTTIQIIK) the chain is on the cytoplasmic side. Residues 236–256 (FVILCLLFVLIIPGSIFIISY) traverse the membrane as a helical segment. The Lumenal segment spans residues 257-482 (SNLLSNFKTD…MEYPVIPRTT (226 aa)). Positions 289–344 (PSRLYYGSTITLRHLDSMVGYLASHDISYPSDVDEQLVALSFEEFAADNEWLIEHP) constitute an MIR 1 domain. N-linked (GlcNAc...) asparagine glycosylation occurs at Asn-347. 2 consecutive MIR domains span residues 359 to 418 (LIPV…VLLI) and 432 to 488 (DKYI…IDSV). A helical transmembrane segment spans residues 483–503 (FLIDSVQLPVDFQVPMIEYYI). The Cytoplasmic portion of the chain corresponds to 504–565 (GKISSSAEFN…KWPITLDTDS (62 aa)). A helical transmembrane segment spans residues 566-586 (PVWFNFAWYGSLLSMIIFMCV). Topologically, residues 587–617 (QCKRMISWNPWTTAEPSFSIKWEVYNEFGWE) are lumenal. A helical membrane pass occupies residues 618-638 (CIVGWFLHFYIFTMSPHFNLG). At 639-662 (KKLYFQSFFFSVLCLLESLDCLAK) the chain is on the cytoplasmic side.

Belongs to the glycosyltransferase 39 family.

The protein localises to the endoplasmic reticulum membrane. The catalysed reaction is a di-trans,poly-cis-dolichyl beta-D-mannosyl phosphate + L-seryl-[protein] = 3-O-(alpha-D-mannosyl)-L-seryl-[protein] + a di-trans,poly-cis-dolichyl phosphate + H(+). The enzyme catalyses a di-trans,poly-cis-dolichyl beta-D-mannosyl phosphate + L-threonyl-[protein] = 3-O-(alpha-D-mannosyl)-L-threonyl-[protein] + a di-trans,poly-cis-dolichyl phosphate + H(+). Its pathway is protein modification; protein glycosylation. Its function is as follows. Probable protein O-mannosyltransferase involved in O-glycosylation which is essential for cell wall rigidity. Transfers mannose from Dol-P-mannose to Ser or Thr residues on proteins. This Saccharomyces cerevisiae (strain ATCC 204508 / S288c) (Baker's yeast) protein is Probable dolichyl-phosphate-mannose--protein mannosyltransferase 7.